The sequence spans 210 residues: Large ribosomal subunit protein bL25 (210 aa).

The tract at residues lysine 191–glutamate 210 is disordered. Acidic residues predominate over residues threonine 199–glutamate 210.

It belongs to the bacterial ribosomal protein bL25 family. CTC subfamily. Part of the 50S ribosomal subunit; part of the 5S rRNA/L5/L18/L25 subcomplex. Contacts the 5S rRNA. Binds to the 5S rRNA independently of L5 and L18.

This is one of the proteins that binds to the 5S RNA in the ribosome where it forms part of the central protuberance. The sequence is that of Large ribosomal subunit protein bL25 from Alteromonas mediterranea (strain DSM 17117 / CIP 110805 / LMG 28347 / Deep ecotype).